A 124-amino-acid chain; its full sequence is UPF0102 protein MSMEG_2508/MSMEI_2448 (124 aa).

It belongs to the UPF0102 family.

The chain is UPF0102 protein MSMEG_2508/MSMEI_2448 from Mycolicibacterium smegmatis (strain ATCC 700084 / mc(2)155) (Mycobacterium smegmatis).